The sequence spans 512 residues: ATP synthase subunit alpha, chloroplastic (512 aa).

ATP is bound at residue 170–177; sequence GDRQTGKT.

The protein belongs to the ATPase alpha/beta chains family. F-type ATPases have 2 components, CF(1) - the catalytic core - and CF(0) - the membrane proton channel. CF(1) has five subunits: alpha(3), beta(3), gamma(1), delta(1), epsilon(1). CF(0) has four main subunits: a, b, b' and c.

The protein resides in the plastid. The protein localises to the chloroplast thylakoid membrane. It carries out the reaction ATP + H2O + 4 H(+)(in) = ADP + phosphate + 5 H(+)(out). In terms of biological role, produces ATP from ADP in the presence of a proton gradient across the membrane. The alpha chain is a regulatory subunit. The polypeptide is ATP synthase subunit alpha, chloroplastic (Staurastrum punctulatum (Green alga)).